We begin with the raw amino-acid sequence, 229 residues long: Small ribosomal subunit protein uS5 (229 aa).

In terms of domain architecture, S5 DRBM spans 61-124 (LEEQVLDVKL…AHAKLSLIKV (64 aa)).

It belongs to the universal ribosomal protein uS5 family. In terms of assembly, part of the 30S ribosomal subunit. Contacts protein S4.

Functionally, with S4 and S12 plays an important role in translational accuracy. The sequence is that of Small ribosomal subunit protein uS5 from Methanococcus maripaludis (strain C6 / ATCC BAA-1332).